The primary structure comprises 399 residues: Elongation factor Tu (399 aa).

Residues 10–207 form the tr-type G domain; that stretch reads KPHLNIGTIG…AVDNYVPEPQ (198 aa). The G1 stretch occupies residues 19–26; that stretch reads GHIDHGKT. 19–26 serves as a coordination point for GTP; sequence GHIDHGKT. Residue Thr-26 participates in Mg(2+) binding. The segment at 60 to 64 is G2; sequence GITIN. A G3 region spans residues 81-84; that stretch reads DCPG. GTP contacts are provided by residues 81–85 and 136–139; these read DCPGH and NKVD. Residues 136–139 form a G4 region; the sequence is NKVD. The interval 174-176 is G5; sequence SAL.

The protein belongs to the TRAFAC class translation factor GTPase superfamily. Classic translation factor GTPase family. EF-Tu/EF-1A subfamily. As to quaternary structure, monomer.

The protein localises to the cytoplasm. It catalyses the reaction GTP + H2O = GDP + phosphate + H(+). In terms of biological role, GTP hydrolase that promotes the GTP-dependent binding of aminoacyl-tRNA to the A-site of ribosomes during protein biosynthesis. The polypeptide is Elongation factor Tu (Kosmotoga olearia (strain ATCC BAA-1733 / DSM 21960 / TBF 19.5.1)).